The following is a 573-amino-acid chain: Proline--tRNA ligase (573 aa).

Belongs to the class-II aminoacyl-tRNA synthetase family. ProS type 1 subfamily. In terms of assembly, homodimer.

The protein localises to the cytoplasm. The enzyme catalyses tRNA(Pro) + L-proline + ATP = L-prolyl-tRNA(Pro) + AMP + diphosphate. In terms of biological role, catalyzes the attachment of proline to tRNA(Pro) in a two-step reaction: proline is first activated by ATP to form Pro-AMP and then transferred to the acceptor end of tRNA(Pro). As ProRS can inadvertently accommodate and process non-cognate amino acids such as alanine and cysteine, to avoid such errors it has two additional distinct editing activities against alanine. One activity is designated as 'pretransfer' editing and involves the tRNA(Pro)-independent hydrolysis of activated Ala-AMP. The other activity is designated 'posttransfer' editing and involves deacylation of mischarged Ala-tRNA(Pro). The misacylated Cys-tRNA(Pro) is not edited by ProRS. The chain is Proline--tRNA ligase from Citrifermentans bemidjiense (strain ATCC BAA-1014 / DSM 16622 / JCM 12645 / Bem) (Geobacter bemidjiensis).